The sequence spans 117 residues: Class I hydrophobin 2 (117 aa).

The signal sequence occupies residues 1–21 (EIVSLSLSLLAVVPLVVLVIA). Intrachain disulfides connect Cys-35/Cys-96, Cys-42/Cys-90, Cys-43/Cys-76, and Cys-97/Cys-110.

This sequence belongs to the fungal hydrophobin family. In terms of assembly, self-assembles to form functional amyloid fibrils called rodlets. Self-assembly into fibrillar rodlets occurs spontaneously at hydrophobic:hydrophilic interfaces and the rodlets further associate laterally to form amphipathic monolayers.

The protein resides in the secreted. It localises to the cell wall. In terms of biological role, aerial growth, conidiation, and dispersal of filamentous fungi in the environment rely upon a capability of their secreting small amphipathic proteins called hydrophobins (HPBs) with low sequence identity. Class I can self-assemble into an outermost layer of rodlet bundles on aerial cell surfaces, conferring cellular hydrophobicity that supports fungal growth, development and dispersal; whereas Class II form highly ordered films at water-air interfaces through intermolecular interactions but contribute nothing to the rodlet structure. The sequence is that of Class I hydrophobin 2 from Pisolithus tinctorius (Dead man's foot).